The primary structure comprises 229 residues: MSLLAQLDQKIAANGGLIVSCQPVPDSPLDKPEIVAAMALAAEQAGAVAIRIEGVANLQATRAVVSVPIIGIVKRDLEDSPVRITAYIEDVDALAQAGADIIAIDGTDRPRPVPVETLLARIHHHGLLAMTDCSTPEDGLACQKLGAEIIGTTLSGYTTPETPEEPDLALVKTLSDAGCRVIAEGRYNSPAQAADAMRHGAWAVTVGSAITRLEHICQWYNTAMKKAVL.

This sequence belongs to the NanE family.

It carries out the reaction an N-acyl-D-glucosamine 6-phosphate = an N-acyl-D-mannosamine 6-phosphate. It functions in the pathway amino-sugar metabolism; N-acetylneuraminate degradation; D-fructose 6-phosphate from N-acetylneuraminate: step 3/5. Its function is as follows. Converts N-acetylmannosamine-6-phosphate (ManNAc-6-P) to N-acetylglucosamine-6-phosphate (GlcNAc-6-P). This Escherichia fergusonii (strain ATCC 35469 / DSM 13698 / CCUG 18766 / IAM 14443 / JCM 21226 / LMG 7866 / NBRC 102419 / NCTC 12128 / CDC 0568-73) protein is Putative N-acetylmannosamine-6-phosphate 2-epimerase.